Here is a 229-residue protein sequence, read N- to C-terminus: Extracellular small neutral protease (229 aa).

The first 28 residues, 1–28, serve as a signal peptide directing secretion; the sequence is MRMPLSVLTAAGLSLATLGLGTAGPASA. The propeptide occupies 29–81; the sequence is TPTAEGAPVVAYDGSPSAGSPADAKAEAAANRAFFEAVLRSVAEKRAANPKST. Ca(2+) is bound by residues D159 and T161. A Zn(2+)-binding site is contributed by H166. E167 is an active-site residue. Zn(2+)-binding residues include H170 and D176. An intrachain disulfide couples C182 to C195.

The protein belongs to the peptidase M7 family. As to quaternary structure, monomer. Ca(2+) is required as a cofactor. Zn(2+) serves as cofactor.

It localises to the secreted. The catalysed reaction is Hydrolyzes proteins with a preference for Tyr or Phe in the P1' position. Has no action on amino-acid p-nitroanilides.. In terms of biological role, milk hydrolyzing. In Streptomyces sp. (strain C5), this protein is Extracellular small neutral protease (snpA).